Reading from the N-terminus, the 163-residue chain is Small ribosomal subunit protein uS5 (163 aa).

Positions 8–71 (LIEKIVDLNR…ERAKKGMVQV (64 aa)) constitute an S5 DRBM domain.

The protein belongs to the universal ribosomal protein uS5 family. As to quaternary structure, part of the 30S ribosomal subunit. Contacts proteins S4 and S8.

Functionally, with S4 and S12 plays an important role in translational accuracy. In terms of biological role, located at the back of the 30S subunit body where it stabilizes the conformation of the head with respect to the body. The polypeptide is Small ribosomal subunit protein uS5 (Oleidesulfovibrio alaskensis (strain ATCC BAA-1058 / DSM 17464 / G20) (Desulfovibrio alaskensis)).